Here is a 278-residue protein sequence, read N- to C-terminus: HTH-type transcriptional activator RhaS (278 aa).

One can recognise an HTH araC/xylS-type domain in the interval 174–272 (NLLLAWLEDH…NWSPRDIRQG (99 aa)). DNA-binding regions (H-T-H motif) lie at residues 191 to 212 (DAVA…KQQT) and 239 to 262 (VTDI…RREF).

As to quaternary structure, binds DNA as a dimer.

The protein resides in the cytoplasm. In terms of biological role, activates expression of the rhaBAD and rhaT operons. The polypeptide is HTH-type transcriptional activator RhaS (Shigella boydii serotype 4 (strain Sb227)).